The chain runs to 379 residues: ATP-sensitive inward rectifier potassium channel 10 (379 aa).

The Cytoplasmic segment spans residues 1 to 61; the sequence is MTSVAKVYYS…LKDLWTTFID (61 aa). Position 36 (arginine 36) interacts with 1,2-dioctanoyl-sn-glycero-3-phospho-(1D-myo-inositol-4,5-bisphosphate). A helical transmembrane segment spans residues 62–88; that stretch reads MQWRYKLLLFSATFAGTWFLFGVVWYL. The Extracellular segment spans residues 89-114; it reads VAVAHGDLLELGPPANHTPCVVQVHT. Cysteine 108 and cysteine 140 form a disulfide bridge. The discontinuously helical; Pore-forming intramembrane region spans 115–131; it reads LTGAFLFSLESQTTIGY. Positions 128–133 match the Selectivity filter motif; that stretch reads TIGYGF. Topologically, residues 132-140 are extracellular; the sequence is GFRYISEEC. Residues 141-166 form a helical membrane-spanning segment; that stretch reads PLAIVLLIAQLVLTTILEIFITGTFL. Topologically, residues 167–379 are cytoplasmic; it reads AKIARPKKRA…SALSVRISNV (213 aa). Residues lysine 168, arginine 171, and lysine 173 each contribute to the 1,2-dioctanoyl-sn-glycero-3-phospho-(1D-myo-inositol-4,5-bisphosphate) site. Position 210–217 (210–217) interacts with ATP; that stretch reads GCQVTGKL.

It belongs to the inward rectifier-type potassium channel (TC 1.A.2.1) family. KCNJ10 subfamily. Homotetramer. In kidney cells, it forms heteromeric channels with Kir5.1/KCNJ16; this interaction is required for KCNJ16 localization to the basolateral membrane. Interacts with MAGI1, alone and possibly as a heteromer with KCNJ16; this interaction may facilitate KCNJ10/KCNJ16 potassium channel expression at the basolateral membrane in kidney cells. Interacts with PATJ. Widely expressed in adult brain, including in the neocortex, the stratum pyrimadale of the hippocampus and the piriform cortex. Expressed by cultured astrocytes and also by cocultured cortical neurons (at protein level). In the distal segment of the nephron, expressed in the distal convoluted tubule, the connecting tubule, and the early cortical collecting duct.

Its subcellular location is the membrane. It localises to the basolateral cell membrane. The catalysed reaction is K(+)(in) = K(+)(out). Its activity is regulated as follows. Channel activity is strongly regulated by variations of cytosolic pH; channels are activated by alkaline and inhibited by acidic pH values. Activated by phosphatidylinositol 4,5 biphosphate (PtdIns(4,5)P2). Inhibited by Ba(2+) and Cs(+). Its function is as follows. May be responsible for potassium buffering action of glial cells in the brain. Inward rectifier potassium channels are characterized by a greater tendency to allow potassium to flow into the cell rather than out of it. Their voltage dependence is regulated by the concentration of extracellular potassium; as external potassium is raised, the voltage range of the channel opening shifts to more positive voltages. The inward rectification is mainly due to the blockage of outward current by internal magnesium. Can be blocked by extracellular barium and cesium. In the kidney, together with KCNJ16, mediates basolateral K(+) recycling in distal tubules; this process is critical for Na(+) reabsorption at the tubules. The sequence is that of ATP-sensitive inward rectifier potassium channel 10 from Mus musculus (Mouse).